Reading from the N-terminus, the 437-residue chain is Chloride intracellular channel protein 5 (437 aa).

Polar residues predominate over residues methionine 1–valine 14. Residues methionine 1 to alanine 197 form a disordered region. Over residues aspartate 34–asparagine 45 the composition is skewed to basic and acidic residues. A run of 4 repeats spans residues glutamine 118–glutamine 125, alanine 126–glutamine 133, alanine 134–glutamine 141, and glycine 142–glutamine 149. The tract at residues glutamine 118 to glutamine 149 is 4 X 8 AA tandem repeats of [AGQ]-[SP]-D-[PS]-E-E-P-Q. The span at serine 121–alanine 157 shows a compositional bias: acidic residues. Residues serine 161 to serine 184 show a composition bias toward polar residues. The G-site motif lies at cysteine 217 to serine 220. The helical transmembrane segment at phenylalanine 219–valine 239 threads the bilayer. One can recognise a GST C-terminal domain in the interval asparagine 263–tyrosine 427.

It belongs to the chloride channel CLIC family. In terms of assembly, component of a multimeric complex consisting of several cytoskeletal proteins, including actin, ezrin, alpha-actinin, gelsolin, and IQGAP1. Interacts with AKAP9. Interacts with TPRN. TPRN, CLIC5 and PTPQR form concentric rings at the base of stereocilia and may form a complex. Interacts with EZR, MYO6 and RDX; the proteins may work together as a complex to stabilize linkages between the plasma membrane and subjacent actin cytoskeleton at the stereocilium base. Post-translationally, phosphorylated. As to expression, expressed in most tissues. Higher levels found in kidney, heart, skeletal muscle, T84 and PANC-1 cells.

Its subcellular location is the golgi apparatus. The protein resides in the cytoplasm. The protein localises to the cytoskeleton. It localises to the microtubule organizing center. It is found in the centrosome. Its subcellular location is the cell cortex. The protein resides in the membrane. The protein localises to the apical cell membrane. It localises to the mitochondrion. It is found in the cell projection. Its subcellular location is the stereocilium. It carries out the reaction Na(+)(in) = Na(+)(out). The enzyme catalyses K(+)(in) = K(+)(out). It catalyses the reaction chloride(in) = chloride(out). Its activity is regulated as follows. Inhibited by F-actin. Functionally, in the soluble state, catalyzes glutaredoxin-like thiol disulfide exchange reactions with reduced glutathione as electron donor. Can insert into membranes and form non-selective ion channels almost equally permeable to Na(+), K(+) and Cl(-). Required for normal hearing. It is necessary for the formation of stereocilia in the inner ear and normal development of the organ of Corti. May play a role in the regulation of transepithelial ion absorption and secretion. Is required for the development and/or maintenance of the proper glomerular endothelial cell and podocyte architecture. Plays a role in formation of the lens suture in the eye, which is important for normal optical properties of the lens. This is Chloride intracellular channel protein 5 (CLIC5) from Bos taurus (Bovine).